A 430-amino-acid polypeptide reads, in one-letter code: Enolase (430 aa).

Gln-167 contacts (2R)-2-phosphoglycerate. The active-site Proton donor is Glu-209. Residues Asp-246, Glu-287, and Asp-314 each coordinate Mg(2+). The (2R)-2-phosphoglycerate site is built by Lys-339, Arg-368, Ser-369, and Lys-390. Lys-339 (proton acceptor) is an active-site residue.

The protein belongs to the enolase family. Requires Mg(2+) as cofactor.

Its subcellular location is the cytoplasm. The protein localises to the secreted. It is found in the cell surface. It carries out the reaction (2R)-2-phosphoglycerate = phosphoenolpyruvate + H2O. The protein operates within carbohydrate degradation; glycolysis; pyruvate from D-glyceraldehyde 3-phosphate: step 4/5. Catalyzes the reversible conversion of 2-phosphoglycerate (2-PG) into phosphoenolpyruvate (PEP). It is essential for the degradation of carbohydrates via glycolysis. The chain is Enolase from Prochlorococcus marinus (strain MIT 9312).